The primary structure comprises 104 residues: MGQPAKVLQLFKTLHRTRQQVFKNDKRALEAARVKINEEFKKHKNETSPEKIKEMMKLGSDVELLLRTAVIQGIHTDHDTLQLVPRKDLLTENVPYCDAPTQKQ.

Serine 60 carries the phosphoserine modification.

The protein belongs to the complex I LYR family. As to quaternary structure, interacts with UQCRFS1.

It localises to the mitochondrion matrix. Its function is as follows. Assembly factor required for Rieske Fe-S protein UQCRFS1 incorporation into the cytochrome b-c1 (CIII) complex. Functions as a chaperone, binding to this subunit within the mitochondrial matrix and stabilizing it prior to its translocation and insertion into the late CIII dimeric intermediate within the mitochondrial inner membrane. In Mus musculus (Mouse), this protein is Complex III assembly factor LYRM7 (Lyrm7).